A 275-amino-acid polypeptide reads, in one-letter code: Large ribosomal subunit protein uL2 (275 aa).

Disordered stretches follow at residues A28–I54 and V223–K275.

Belongs to the universal ribosomal protein uL2 family. In terms of assembly, part of the 50S ribosomal subunit. Forms a bridge to the 30S subunit in the 70S ribosome.

One of the primary rRNA binding proteins. Required for association of the 30S and 50S subunits to form the 70S ribosome, for tRNA binding and peptide bond formation. It has been suggested to have peptidyltransferase activity; this is somewhat controversial. Makes several contacts with the 16S rRNA in the 70S ribosome. This is Large ribosomal subunit protein uL2 from Saccharophagus degradans (strain 2-40 / ATCC 43961 / DSM 17024).